The sequence spans 396 residues: Pre-mRNA-splicing regulator WTAP (396 aa).

Residue methionine 1 is modified to N-acetylmethionine. Serine 14 carries the post-translational modification Phosphoserine. Composition is skewed to low complexity over residues 240–257, 278–291, and 304–316; these read QQQQ…TTAS, SNGS…SGSG, and PSSP…SSNS. Residues 240 to 396 form a disordered region; sequence QQQQSQASAP…SSVNVQGSVL (157 aa). Serine 305, serine 306, and serine 341 each carry phosphoserine. Polar residues predominate over residues 340 to 356; that stretch reads DSPTGSENSLTHQSNDT. At threonine 350 the chain carries Phosphothreonine. The segment covering 357-368 has biased composition (basic and acidic residues); sequence DSSHDPQEEKAV. Positions 380–396 are enriched in polar residues; sequence HVQNGLDSSVNVQGSVL. Position 388 is a phosphoserine (serine 388).

This sequence belongs to the fl(2)d family. As to quaternary structure, component of the WMM complex, a N6-methyltransferase complex composed of a catalytic subcomplex, named MAC, and of an associated subcomplex, named MACOM. The MAC subcomplex is composed of METTL3 and METTL14. The MACOM subcomplex is composed of WTAP, ZC3H13, CBLL1/HAKAI, VIRMA, and, in some cases of RBM15 (RBM15 or RBM15B). Interacts with WT1. Also a component of a MACOM-like complex, named WTAP complex, composed of WTAP, ZC3H13, CBLL1, VIRMA, RBM15, BCLAF1 and THRAP3. As to expression, ubiquitously expressed.

Its subcellular location is the nucleus speckle. It localises to the nucleus. The protein localises to the nucleoplasm. The protein resides in the cytoplasm. Functionally, associated component of the WMM complex, a complex that mediates N6-methyladenosine (m6A) methylation of RNAs, a modification that plays a role in the efficiency of mRNA splicing and RNA processing. Required for accumulation of METTL3 and METTL14 to nuclear speckle. Acts as a mRNA splicing regulator. Regulates G2/M cell-cycle transition by binding to the 3' UTR of CCNA2, which enhances its stability. Impairs WT1 DNA-binding ability and inhibits expression of WT1 target genes. The chain is Pre-mRNA-splicing regulator WTAP from Homo sapiens (Human).